Here is a 348-residue protein sequence, read N- to C-terminus: Dihydroorotase (348 aa).

Zn(2+) is bound by residues histidine 17 and histidine 19. Substrate is bound by residues histidine 19–arginine 21 and asparagine 45. Residues lysine 103, histidine 140, and histidine 178 each contribute to the Zn(2+) site. An N6-carboxylysine modification is found at lysine 103. Residue histidine 140 participates in substrate binding. Leucine 223 serves as a coordination point for substrate. Aspartate 251 is a Zn(2+) binding site. The active site involves aspartate 251. Residues histidine 255 and alanine 267 each coordinate substrate.

Belongs to the metallo-dependent hydrolases superfamily. DHOase family. Class II DHOase subfamily. As to quaternary structure, homodimer. Requires Zn(2+) as cofactor.

The enzyme catalyses (S)-dihydroorotate + H2O = N-carbamoyl-L-aspartate + H(+). It participates in pyrimidine metabolism; UMP biosynthesis via de novo pathway; (S)-dihydroorotate from bicarbonate: step 3/3. In terms of biological role, catalyzes the reversible cyclization of carbamoyl aspartate to dihydroorotate. The sequence is that of Dihydroorotase from Escherichia coli O6:H1 (strain CFT073 / ATCC 700928 / UPEC).